The following is a 240-amino-acid chain: Large ribosomal subunit protein bL25 (240 aa).

Disordered stretches follow at residues 1–20 (MAENVLSAQKRTEQGKGPAR) and 220–240 (PAAGAAPAKGGEAKGGDKGKK). Low complexity predominate over residues 220 to 229 (PAAGAAPAKG). Positions 230 to 240 (GEAKGGDKGKK) are enriched in basic and acidic residues.

This sequence belongs to the bacterial ribosomal protein bL25 family. CTC subfamily. In terms of assembly, part of the 50S ribosomal subunit; part of the 5S rRNA/L5/L18/L25 subcomplex. Contacts the 5S rRNA. Binds to the 5S rRNA independently of L5 and L18.

This is one of the proteins that binds to the 5S RNA in the ribosome where it forms part of the central protuberance. The polypeptide is Large ribosomal subunit protein bL25 (Anaeromyxobacter dehalogenans (strain 2CP-C)).